Consider the following 606-residue polypeptide: Vacuolar calcium ion transporter (606 aa).

Positions 1–110 (MSPPRRVSFP…NSLDPNPGLM (110 aa)) are disordered. At 1–137 (MSPPRRVSFP…PTYWGSMKAA (137 aa)) the chain is on the cytoplasmic side. The segment covering 18-30 (PPLADSPLSSPKL) has biased composition (low complexity). Polar residues predominate over residues 36 to 56 (QSSSTPIVSSNLPTDTTNSAS). The helical transmembrane segment at 138–158 (ITSTWLNVLLVFIPIGWALYL) threads the bilayer. At 159–170 (AKHNGGKDSISD) the chain is on the vacuolar side. A helical transmembrane segment spans residues 171–191 (TAVFCCTFIAIIPLAGLLGFA). The Cytoplasmic segment spans residues 192–204 (TEEAALRLGQTLG). The chain crosses the membrane as a helical span at residues 205–225 (GLLNATLGNAVELIVAILALI). Over 226 to 236 (KCELQVVQSSL) the chain is Vacuolar. The helical transmembrane segment at 237-257 (VGSILSNILLVLGMCFFAGGV) threads the bilayer. At 258 to 272 (RFAEQAIKSTAAQLN) the chain is on the cytoplasmic side. Residues 273-293 (ASLLLIAVIAVLIPSAFHFSI) traverse the membrane as a helical segment. The Vacuolar portion of the chain corresponds to 294–313 (SSSTSNTDASELANGEGADL). Residues 314-334 (LSMSHAVSILLLILYLGYLLF) traverse the membrane as a helical segment. The Cytoplasmic segment spans residues 335–437 (QMWTHATYYV…EEEEETPQMN (103 aa)). The interval 376-434 (DEEESYSTATTVSDAAVPPSARAEGGEVPATHGPGTAAAETGNRVEHEDAEEEEEEETP) is disordered. The span at 423–433 (EDAEEEEEEET) shows a compositional bias: acidic residues. The helical transmembrane segment at 438-458 (VVCTIALMVIDTVLVGVTAEF) threads the bilayer. Residues 459-477 (LVDSINGMVESNPSLSAEW) lie on the Vacuolar side of the membrane. Residues 478–498 (VGLILLPIVGNAAEHFTAVSV) traverse the membrane as a helical segment. Over 499–505 (SVKDKLD) the chain is Cytoplasmic. The chain crosses the membrane as a helical span at residues 506–526 (LSISVAVGSSIQIALFVIPVI). The Vacuolar portion of the chain corresponds to 527–535 (ELLAWTIGK). Residues 536–556 (PMTLLFDPYESIVLFLSVLIV) form a helical membrane-spanning segment. Residues 557 to 566 (NQTLADGRSN) are Cytoplasmic-facing. Residues 567-587 (WMEGMVLMMLYIIIAVSFWYY) traverse the membrane as a helical segment. Residues 588–606 (PGSTTATLLGCQDSSSVTG) lie on the Vacuolar side of the membrane.

It belongs to the Ca(2+):cation antiporter (CaCA) (TC 2.A.19) family.

The protein localises to the vacuole membrane. Functionally, has a role in promoting intracellular calcium ion sequestration via the exchange of calcium ions for hydrogen ions across the vacuolar membrane. In Cryptococcus neoformans var. grubii serotype A (strain H99 / ATCC 208821 / CBS 10515 / FGSC 9487) (Filobasidiella neoformans var. grubii), this protein is Vacuolar calcium ion transporter.